Here is a 377-residue protein sequence, read N- to C-terminus: Pseudouridylate synthase RPUSD4, mitochondrial (377 aa).

Residues M1 to L46 constitute a mitochondrion transit peptide. D153 is an active-site residue.

This sequence belongs to the pseudouridine synthase RluA family. In terms of assembly, interacts with 16S mt-rRNA, mt-tRNA(Phe) and mt-tRNA(Met). Forms a regulatory protein-RNA complex, consisting of RCC1L, NGRN, RPUSD3, RPUSD4, TRUB2, FASTKD2 and 16S mt-rRNA.

The protein localises to the mitochondrion matrix. It is found in the nucleus. Its subcellular location is the cytoplasm. The enzyme catalyses uridine in 5S rRNA = pseudouridine in 5S rRNA. It catalyses the reaction a uridine in tRNA = a pseudouridine in tRNA. The catalysed reaction is a uridine in mRNA = a pseudouridine in mRNA. Catalyzes uridine to pseudouridine isomerization (pseudouridylation) of different mitochondrial RNA substrates. Acts on position 1397 in 16S mitochondrial ribosomal RNA (16S mt-rRNA). This modification is required for the assembly of 16S mt-rRNA into a functional mitochondrial ribosome. As a component of a functional protein-RNA module, consisting of RCC1L, NGRN, RPUSD3, RPUSD4, TRUB2, FASTKD2 and 16S mt-rRNA, controls 16S mt-rRNA abundance and is required for intra-mitochondrial translation. Acts on position 39 in mitochondrial tRNA(Phe). Also catalyzes pseudouridylation of mRNAs in nucleus: acts as a regulator of pre-mRNA splicing by mediating pseudouridylation of pre-mRNAs at locations associated with alternatively spliced regions. Pseudouridylation of pre-mRNAs near splice sites directly regulates mRNA splicing and mRNA 3'-end processing. This is Pseudouridylate synthase RPUSD4, mitochondrial from Mus musculus (Mouse).